The sequence spans 335 residues: Ferrochelatase (335 aa).

H211 and E290 together coordinate Fe cation.

Belongs to the ferrochelatase family.

It localises to the cytoplasm. The catalysed reaction is heme b + 2 H(+) = protoporphyrin IX + Fe(2+). Its pathway is porphyrin-containing compound metabolism; protoheme biosynthesis; protoheme from protoporphyrin-IX: step 1/1. In terms of biological role, catalyzes the ferrous insertion into protoporphyrin IX. This chain is Ferrochelatase, found in Sulfurihydrogenibium sp. (strain YO3AOP1).